The chain runs to 1220 residues: Protein transport protein Sec31A (1220 aa).

WD repeat units lie at residues 4-47 (KEVD…EIFE), 68-111 (RYHK…AGDK), 120-160 (KHTG…TPMT), 166-206 (QPPE…PIIK), 209-254 (DHSN…SPLR), 258-298 (NHAR…VLYE), and 301-342 (TNTQ…DGLR). Residues 161–471 (PGAKTQPPED…IDASQTEFEK (311 aa)) form an interaction with SEC13 region. One copy of the WD 8; interaction with SEC13 repeat lies at 397–430 (SFSFGGKLVTFENVRMPSHQGAEQQQQQHHVFIS). Serine 527 and serine 532 each carry phosphoserine. Lysine 647 is covalently cross-linked (Glycyl lysine isopeptide (Lys-Gly) (interchain with G-Cter in ubiquitin)). Disordered regions lie at residues 791-908 (GEPV…NAYP) and 924-1096 (QLYA…GNTF). The residue at position 799 (serine 799) is a Phosphoserine. The interaction with PDCD6 stretch occupies residues 800–1113 (PKIPYEKQQL…TKKITKKPIP (314 aa)). The ALG-2-binding site motif-2 (ABS-2) motif lies at 842 to 848 (GFIMHGN). Over residues 849–859 (VNPNAAGQLPT) the composition is skewed to polar residues. Residues 869–882 (PPYPQPQPYQPAQP) are compositionally biased toward pro residues. Residues 962 to 972 (PSSSAYALPPG) are compositionally biased toward low complexity. Composition is skewed to polar residues over residues 984-995 (PASQRTGPQNGW) and 1031-1053 (PQSQMLQQQPSAPVPLSSQSSFP). Residue threonine 1161 is modified to Phosphothreonine. Position 1163 is a phosphoserine (serine 1163). Lysine 1217 is covalently cross-linked (Glycyl lysine isopeptide (Lys-Gly) (interchain with G-Cter in ubiquitin)).

Belongs to the WD repeat SEC31 family. As to quaternary structure, COPII is composed of at least 5 proteins: the SEC23/24 complex, the SEC13/31 complex and SAR1. SEC13 and SEC31 make a 2:2 tetramer that forms the edge element of the COPII outer coat. The tetramer self-assembles in multiple copies to form the complete polyhedral cage. Interacts (via WD 8) with SEC13. Interacts with PDCD6; interaction takes place in response to cytosolic calcium increase and leads to bridge together the BCR(KLHL12) complex and SEC31A, leading to monoubiquitination. Interacts with KLHL12. Post-translationally, monoubiquitinated by the BCR(KLHL12) E3 ubiquitin ligase complex, leading to regulate the size of COPII coats. In terms of tissue distribution, abundantly and ubiquitously expressed.

The protein localises to the cytoplasm. It localises to the cytoplasmic vesicle. Its subcellular location is the COPII-coated vesicle membrane. The protein resides in the endoplasmic reticulum membrane. It is found in the cytosol. Functionally, component of the coat protein complex II (COPII) which promotes the formation of transport vesicles from the endoplasmic reticulum (ER). The coat has two main functions, the physical deformation of the endoplasmic reticulum membrane into vesicles and the selection of cargo molecules. The polypeptide is Protein transport protein Sec31A (SEC31A) (Homo sapiens (Human)).